The primary structure comprises 213 residues: Orotate phosphoribosyltransferase (213 aa).

Position 26 (lysine 26) interacts with 5-phospho-alpha-D-ribose 1-diphosphate. Orotate is bound at residue 34 to 35 (FF). Residues 72-73 (YK), arginine 98, lysine 99, lysine 102, histidine 104, and 123-131 (DDVISAGTS) contribute to the 5-phospho-alpha-D-ribose 1-diphosphate site. Residues serine 127 and arginine 155 each coordinate orotate.

The protein belongs to the purine/pyrimidine phosphoribosyltransferase family. PyrE subfamily. Homodimer. Mg(2+) serves as cofactor.

It carries out the reaction orotidine 5'-phosphate + diphosphate = orotate + 5-phospho-alpha-D-ribose 1-diphosphate. The protein operates within pyrimidine metabolism; UMP biosynthesis via de novo pathway; UMP from orotate: step 1/2. Catalyzes the transfer of a ribosyl phosphate group from 5-phosphoribose 1-diphosphate to orotate, leading to the formation of orotidine monophosphate (OMP). The protein is Orotate phosphoribosyltransferase of Neisseria meningitidis serogroup C (strain 053442).